The chain runs to 1436 residues: Probable deoxyribonuclease RhsB (1436 aa).

Residues 16–42 are disordered; the sequence is HAGNRPNPPADRPQPCQGKPPTSPGKT. 2 helical membrane passes run 48–68 and 70–90; these read FLGALAGAVAGALVAAAVAAA and VFLVGVTGGLAVAAVGALAVF. 5 YD repeats span residues 486–521, 569–605, 612–647, 766–799, and 847–879; these read YNTAHRLTRWHDNDQTWARYEYDAQGRCVYTTCADG, YDEVGNLLREISPAGRVVEFTYLDDTGRVSTFTDGSG, YDDAQRLCGVTDPLGREWGWVYDAEGNPERLTGPDA, DLLTARTDAEGRTWRYEYDRESQQLIAVTAPDGS, and YDARGLLLRETAPDDTLHYRYDAAGRLTEVSSA.

The protein belongs to the RHS/WapA nuclease family.

The protein localises to the membrane. In terms of biological role, toxic component of a toxin-immunity protein module, which functions as a cellular contact-dependent growth inhibition (CDI) system. This protein may be a nuclease that is specifically inhibited by its cognate immunity protein RhsBI. Upon expression of the C-terminus (residues 1284-1436) in E.coli growth is inhibited, cells elongate, nucleoids condense and plasmid DNA is degraded; these effects are blocked specifically by cognate immunity protein RshIB. Cell contact is necessary for growth inhibition. The protein is Probable deoxyribonuclease RhsB (rhsB) of Dickeya dadantii (strain 3937) (Erwinia chrysanthemi (strain 3937)).